The following is a 455-amino-acid chain: Tubulin alpha chain (455 aa).

Glutamine 11, glutamate 77, serine 145, glycine 149, threonine 150, serine 184, asparagine 211, and asparagine 233 together coordinate GTP. Glutamate 77 is a Mg(2+) binding site. Glutamate 259 is a catalytic residue.

This sequence belongs to the tubulin family. Dimer of alpha and beta chains. A typical microtubule is a hollow water-filled tube with an outer diameter of 25 nm and an inner diameter of 15 nM. Alpha-beta heterodimers associate head-to-tail to form protofilaments running lengthwise along the microtubule wall with the beta-tubulin subunit facing the microtubule plus end conferring a structural polarity. Microtubules usually have 13 protofilaments but different protofilament numbers can be found in some organisms and specialized cells. Mg(2+) serves as cofactor.

It localises to the cytoplasm. It is found in the cytoskeleton. The catalysed reaction is GTP + H2O = GDP + phosphate + H(+). Functionally, tubulin is the major constituent of microtubules, a cylinder consisting of laterally associated linear protofilaments composed of alpha- and beta-tubulin heterodimers. Microtubules grow by the addition of GTP-tubulin dimers to the microtubule end, where a stabilizing cap forms. Below the cap, tubulin dimers are in GDP-bound state, owing to GTPase activity of alpha-tubulin. The sequence is that of Tubulin alpha chain from Entamoeba histolytica (strain ATCC 30459 / HM-1:IMSS / ABRM).